The chain runs to 648 residues: Transketolase (648 aa).

Substrate is bound at residue His-22. Thiamine diphosphate contacts are provided by residues His-62 and 109-111 (GPL). Asp-150 contributes to the Mg(2+) binding site. Gly-151 and Asn-180 together coordinate thiamine diphosphate. Residues Asn-180 and Val-182 each contribute to the Mg(2+) site. Substrate is bound by residues His-252, Arg-345, and Ser-372. His-252 contacts thiamine diphosphate. The Proton donor role is filled by Glu-397. Thiamine diphosphate is bound at residue Phe-423. Substrate contacts are provided by His-447, Asp-455, and Arg-506.

It belongs to the transketolase family. As to quaternary structure, homodimer. The cofactor is Mg(2+). Requires Ca(2+) as cofactor. It depends on Mn(2+) as a cofactor. Co(2+) serves as cofactor. Thiamine diphosphate is required as a cofactor.

It catalyses the reaction D-sedoheptulose 7-phosphate + D-glyceraldehyde 3-phosphate = aldehydo-D-ribose 5-phosphate + D-xylulose 5-phosphate. Functionally, catalyzes the transfer of a two-carbon ketol group from a ketose donor to an aldose acceptor, via a covalent intermediate with the cofactor thiamine pyrophosphate. The sequence is that of Transketolase (tkt) from Mycoplasma genitalium (strain ATCC 33530 / DSM 19775 / NCTC 10195 / G37) (Mycoplasmoides genitalium).